The primary structure comprises 60 residues: uncharacterized protein (60 aa).

Residues 27–49 (YYWLVSTARMVLGVTILILILIG) form a helical membrane-spanning segment.

The protein localises to the membrane. This is an uncharacterized protein from Archaeoglobus fulgidus (strain ATCC 49558 / DSM 4304 / JCM 9628 / NBRC 100126 / VC-16).